Here is a 422-residue protein sequence, read N- to C-terminus: MVTLDKSKDLFDKARKILPGGVSSPVRAIKPYPFYTESANGCRIKDVDGNEYIDYCLAYGPNILGHANPVIKQAIIDQLDKGWLYGTPTGLEVTLGEKIASLYPSIDMLRFVSTGTEATMSALRAARGFTCKNKFVKIEGGFHGAHDAVLVKAGSGATTHGKPDSLGIPEDFTKNTLQVAYNDIEAMTEVIESNQDDMAAVIMEPVLGNIGPILPEGDYLKEVRKVTEENDVVLIFDEVITGFRLAMGGAQEYFGVTPDMTTLGKIVGGGLPIGVFGGKREILEMISPSGSVYQAGTFSGSPASVAAGIAAVDVLEKEKVHEKLEATGNMLRAGLNDIIADKRLDFHVGGIASMFKVFFGDKPLNYQDVLKCDKEGYLQFFHDMLDSNVFLPPSQFETNFLSTAHTEADLETTLEAYAVNLK.

Lys265 carries the post-translational modification N6-(pyridoxal phosphate)lysine.

Belongs to the class-III pyridoxal-phosphate-dependent aminotransferase family. HemL subfamily. It depends on pyridoxal 5'-phosphate as a cofactor.

The protein localises to the cytoplasm. It catalyses the reaction (S)-4-amino-5-oxopentanoate = 5-aminolevulinate. It participates in porphyrin-containing compound metabolism; protoporphyrin-IX biosynthesis; 5-aminolevulinate from L-glutamyl-tRNA(Glu): step 2/2. This chain is Glutamate-1-semialdehyde 2,1-aminomutase, found in Methanococcoides burtonii (strain DSM 6242 / NBRC 107633 / OCM 468 / ACE-M).